The following is a 242-amino-acid chain: 1-(5-phosphoribosyl)-5-[(5-phosphoribosylamino)methylideneamino] imidazole-4-carboxamide isomerase (242 aa).

Asp8 acts as the Proton acceptor in catalysis. Catalysis depends on Asp129, which acts as the Proton donor.

This sequence belongs to the HisA/HisF family.

It is found in the cytoplasm. The catalysed reaction is 1-(5-phospho-beta-D-ribosyl)-5-[(5-phospho-beta-D-ribosylamino)methylideneamino]imidazole-4-carboxamide = 5-[(5-phospho-1-deoxy-D-ribulos-1-ylimino)methylamino]-1-(5-phospho-beta-D-ribosyl)imidazole-4-carboxamide. Its pathway is amino-acid biosynthesis; L-histidine biosynthesis; L-histidine from 5-phospho-alpha-D-ribose 1-diphosphate: step 4/9. This Beijerinckia indica subsp. indica (strain ATCC 9039 / DSM 1715 / NCIMB 8712) protein is 1-(5-phosphoribosyl)-5-[(5-phosphoribosylamino)methylideneamino] imidazole-4-carboxamide isomerase.